Here is a 496-residue protein sequence, read N- to C-terminus: N-succinylglutamate 5-semialdehyde dehydrogenase (496 aa).

Residue 229 to 234 (GSYATG) participates in NAD(+) binding. Catalysis depends on residues Glu252 and Cys286.

It belongs to the aldehyde dehydrogenase family. AstD subfamily.

The enzyme catalyses N-succinyl-L-glutamate 5-semialdehyde + NAD(+) + H2O = N-succinyl-L-glutamate + NADH + 2 H(+). It participates in amino-acid degradation; L-arginine degradation via AST pathway; L-glutamate and succinate from L-arginine: step 4/5. In terms of biological role, catalyzes the NAD-dependent reduction of succinylglutamate semialdehyde into succinylglutamate. The protein is N-succinylglutamate 5-semialdehyde dehydrogenase of Legionella pneumophila subsp. pneumophila (strain Philadelphia 1 / ATCC 33152 / DSM 7513).